A 734-amino-acid polypeptide reads, in one-letter code: Photosystem I P700 chlorophyll a apoprotein A2 (734 aa).

8 helical membrane-spanning segments follow: residues 46-69 (IFAS…FHVA), 135-158 (LYTG…LHLQ), 175-199 (LNHH…HVAI), 273-291 (IAHH…GHMY), 330-353 (IHFQ…QHMY), 369-395 (AALY…IFFI), 417-439 (AIIS…LYVH), and 517-535 (FLVH…LILV). [4Fe-4S] cluster contacts are provided by Cys-559 and Cys-568. Transmembrane regions (helical) follow at residues 575 to 596 (AFYL…YWHW) and 643 to 665 (LSVW…MFLI). Residues His-654, Met-662, and Tyr-670 each coordinate chlorophyll a. Residue Trp-671 coordinates phylloquinone. Residues 707 to 727 (LVGLAHFSVGYIFTYAAFLIA) form a helical membrane-spanning segment.

Belongs to the PsaA/PsaB family. In terms of assembly, the PsaA/B heterodimer binds the P700 chlorophyll special pair and subsequent electron acceptors. PSI consists of a core antenna complex that captures photons, and an electron transfer chain that converts photonic excitation into a charge separation. The eukaryotic PSI reaction center is composed of at least 11 subunits. P700 is a chlorophyll a/chlorophyll a' dimer, A0 is one or more chlorophyll a, A1 is one or both phylloquinones and FX is a shared 4Fe-4S iron-sulfur center. serves as cofactor.

The protein resides in the plastid. It localises to the chloroplast thylakoid membrane. The enzyme catalyses reduced [plastocyanin] + hnu + oxidized [2Fe-2S]-[ferredoxin] = oxidized [plastocyanin] + reduced [2Fe-2S]-[ferredoxin]. Functionally, psaA and PsaB bind P700, the primary electron donor of photosystem I (PSI), as well as the electron acceptors A0, A1 and FX. PSI is a plastocyanin-ferredoxin oxidoreductase, converting photonic excitation into a charge separation, which transfers an electron from the donor P700 chlorophyll pair to the spectroscopically characterized acceptors A0, A1, FX, FA and FB in turn. Oxidized P700 is reduced on the lumenal side of the thylakoid membrane by plastocyanin. The polypeptide is Photosystem I P700 chlorophyll a apoprotein A2 (Aethionema cordifolium (Lebanon stonecress)).